We begin with the raw amino-acid sequence, 152 residues long: Transcriptional regulator MraZ (152 aa).

SpoVT-AbrB domains follow at residues 5–52 (ASAI…PIHE) and 81–124 (AHEV…DEQA).

This sequence belongs to the MraZ family. Forms oligomers.

Its subcellular location is the cytoplasm. The protein resides in the nucleoid. This Shewanella sp. (strain ANA-3) protein is Transcriptional regulator MraZ.